Here is a 298-residue protein sequence, read N- to C-terminus: MATRRALHFVFKVKNRFQTVHFFRDVLGMQVLRHEEFEEGCKAACNGPYDGKWSKTMVGFGPEDDHFVAELTYNYGIGDYKLGNDFMGITLASSQAVSNARKLEWPLSKVAEGIFETEAPGGYKFYLQDRSPSQSDPVLKVTLAVSDLQKSLNYWSNLLGMKIYEQDEEKQRALLGYADNQCKLELQGIQGAVDHAAAFGRIAFSCPQKELPDLEDLMKRESHSILTPLVSLDTPGKATVQVVILADPDGHEICFVGDEAFRELSKMDPKGSKLLDDAMEADKSDEWFATRNKPKASG.

Residues 5 to 130 (RALHFVFKVK…GGYKFYLQDR (126 aa)) enclose the VOC 1 domain. Lys-109 bears the N6-succinyllysine mark. A Phosphoserine modification is found at Ser-131. Residues 137–258 (PVLKVTLAVS…DGHEICFVGD (122 aa)) enclose the VOC 2 domain. At Lys-273 the chain carries N6-succinyllysine.

The protein belongs to the glyoxalase I family. In terms of assembly, interacts with NUDT9.

The protein localises to the mitochondrion. The chain is Glyoxalase domain-containing protein 4 (Glod4) from Mus musculus (Mouse).